The chain runs to 257 residues: Probable septum site-determining protein MinC (257 aa).

Over residues 123-141 (AVEAAAAPAAEPTPEPGAA) the composition is skewed to low complexity. Residues 123–144 (AVEAAAAPAAEPTPEPGAASQP) are disordered.

Belongs to the MinC family. Interacts with MinD and FtsZ.

Its function is as follows. Cell division inhibitor that blocks the formation of polar Z ring septums. Rapidly oscillates between the poles of the cell to destabilize FtsZ filaments that have formed before they mature into polar Z rings. Prevents FtsZ polymerization. This Burkholderia multivorans (strain ATCC 17616 / 249) protein is Probable septum site-determining protein MinC.